Reading from the N-terminus, the 212-residue chain is Ribosomal RNA small subunit methyltransferase G (212 aa).

Residues glycine 80, leucine 85, alanine 131–glutamate 132, and arginine 146 contribute to the S-adenosyl-L-methionine site.

It belongs to the methyltransferase superfamily. RNA methyltransferase RsmG family.

The protein localises to the cytoplasm. The catalysed reaction is guanosine(527) in 16S rRNA + S-adenosyl-L-methionine = N(7)-methylguanosine(527) in 16S rRNA + S-adenosyl-L-homocysteine. Specifically methylates the N7 position of guanine in position 527 of 16S rRNA. The chain is Ribosomal RNA small subunit methyltransferase G from Xanthomonas axonopodis pv. citri (strain 306).